A 30-amino-acid chain; its full sequence is U-actitoxin-Bcg2a (30 aa).

Cysteine 7 and cysteine 27 form a disulfide bridge.

The protein localises to the secreted. The protein resides in the nematocyst. Its function is as follows. Possible voltage-gated potassium channel (Kv) blocker. This chain is U-actitoxin-Bcg2a, found in Bunodosoma cangicum (Sea anemone).